Consider the following 692-residue polypeptide: Elongation factor G 2 (692 aa).

The tr-type G domain maps to 8-283 (EKTRNIGIMA…AVIDYMPSPV (276 aa)). Residues 17 to 24 (AHIDAGKT), 81 to 85 (DTPGH), and 135 to 138 (NKMD) contribute to the GTP site.

The protein belongs to the TRAFAC class translation factor GTPase superfamily. Classic translation factor GTPase family. EF-G/EF-2 subfamily.

The protein localises to the cytoplasm. Catalyzes the GTP-dependent ribosomal translocation step during translation elongation. During this step, the ribosome changes from the pre-translocational (PRE) to the post-translocational (POST) state as the newly formed A-site-bound peptidyl-tRNA and P-site-bound deacylated tRNA move to the P and E sites, respectively. Catalyzes the coordinated movement of the two tRNA molecules, the mRNA and conformational changes in the ribosome. The chain is Elongation factor G 2 from Syntrophotalea carbinolica (strain DSM 2380 / NBRC 103641 / GraBd1) (Pelobacter carbinolicus).